Reading from the N-terminus, the 231-residue chain is Triggering receptor expressed on myeloid cells 1 (231 aa).

Residues 1 to 20 (MRKTRLWGLLWMFFVSELLA) form the signal peptide. Topologically, residues 21–202 (ATKLTEEKYE…TDIIRVPVFN (182 aa)) are extracellular. The Ig-like V-type domain occupies 26 to 131 (EEKYELKEGQ…LFDRIRLVVT (106 aa)). Cys-41 and Cys-110 are oxidised to a cystine. Polar residues-rich tracts occupy residues 134–157 (SSGT…TTTK) and 164–182 (TSPT…DVST). The tract at residues 134–182 (SSGTPGSSENSTPNVYKTPPTTTKALRPLYTSPTTVTQAPPKSTADVST) is disordered. N-linked (GlcNAc...) asparagine glycosylation is found at Asn-188 and Asn-191. A helical transmembrane segment spans residues 203–223 (IAILVAGGFLSKSLVFSVLFA). Residues 224-231 (VTLRSFVP) are Cytoplasmic-facing.

In terms of assembly, monomer. Homomultimer; when activated. Interacts with TYROBP/DAP12. Interacts with TLR4.

It is found in the cell membrane. Cell surface receptor that plays important roles in innate and adaptive immunity by amplifying inflammatory responses. Upon activation by various ligands such as PGLYRP1, HMGB1 or HSP70, multimerizes and forms a complex with transmembrane adapter TYROBP/DAP12. In turn, initiates a SYK-mediated cascade of tyrosine phosphorylation, activating multiple downstream mediators such as BTK, MAPK1, MAPK3 or phospholipase C-gamma. This cascade promotes the neutrophil- and macrophage-mediated release of pro-inflammatory cytokines and/or chemokines, as well as their migration and thereby amplifies inflammatory responses that are triggered by bacterial and fungal infections. By also promoting the amplification of inflammatory signals that are initially triggered by Toll-like receptor (TLR) and NOD-like receptor engagement, plays a major role in the pathophysiology of acute and chronic inflammatory diseases of different etiologies including septic shock and atherosclerosis. The chain is Triggering receptor expressed on myeloid cells 1 (TREM1) from Pongo abelii (Sumatran orangutan).